A 430-amino-acid chain; its full sequence is Asparagine--tRNA ligase (430 aa).

This sequence belongs to the class-II aminoacyl-tRNA synthetase family. As to quaternary structure, homodimer.

It is found in the cytoplasm. It carries out the reaction tRNA(Asn) + L-asparagine + ATP = L-asparaginyl-tRNA(Asn) + AMP + diphosphate + H(+). This Bacillus licheniformis (strain ATCC 14580 / DSM 13 / JCM 2505 / CCUG 7422 / NBRC 12200 / NCIMB 9375 / NCTC 10341 / NRRL NRS-1264 / Gibson 46) protein is Asparagine--tRNA ligase.